A 213-amino-acid polypeptide reads, in one-letter code: Ribosomal RNA small subunit methyltransferase G (213 aa).

Residues Gly77, Phe82, 130-131, and Arg146 each bind S-adenosyl-L-methionine; that span reads IE.

Belongs to the methyltransferase superfamily. RNA methyltransferase RsmG family.

It is found in the cytoplasm. The catalysed reaction is guanosine(527) in 16S rRNA + S-adenosyl-L-methionine = N(7)-methylguanosine(527) in 16S rRNA + S-adenosyl-L-homocysteine. In terms of biological role, specifically methylates the N7 position of guanine in position 527 of 16S rRNA. The sequence is that of Ribosomal RNA small subunit methyltransferase G from Bartonella tribocorum (strain CIP 105476 / IBS 506).